Consider the following 222-residue polypeptide: Protein GrpE (222 aa).

The tract at residues 1–64 (MSDQNLGQGS…GEEILSDDDL (64 aa)) is disordered. Basic and acidic residues predominate over residues 16 to 44 (EEPIVRDKRRIDPETGKVREPQDLSHEEL). The segment covering 54-64 (QGEEILSDDDL) has biased composition (acidic residues).

Belongs to the GrpE family. Homodimer.

The protein resides in the cytoplasm. Participates actively in the response to hyperosmotic and heat shock by preventing the aggregation of stress-denatured proteins, in association with DnaK and GrpE. It is the nucleotide exchange factor for DnaK and may function as a thermosensor. Unfolded proteins bind initially to DnaJ; upon interaction with the DnaJ-bound protein, DnaK hydrolyzes its bound ATP, resulting in the formation of a stable complex. GrpE releases ADP from DnaK; ATP binding to DnaK triggers the release of the substrate protein, thus completing the reaction cycle. Several rounds of ATP-dependent interactions between DnaJ, DnaK and GrpE are required for fully efficient folding. The polypeptide is Protein GrpE (Leifsonia xyli subsp. xyli (strain CTCB07)).